The chain runs to 475 residues: Ankyrin repeat, SAM and basic leucine zipper domain-containing protein 1 (475 aa).

The tract at residues 1-25 (MAASALRGLPVAGGGESSESEDDGW) is disordered. Residues serine 17, serine 18, and serine 20 each carry the phosphoserine modification. ANK repeat units follow at residues 45–74 (EKKE…SVDS), 78–107 (YGWT…NASF), 110–144 (DKQS…DPNV), 148–177 (RLMT…EVNT), 181–210 (NGYT…NKML), and 214–243 (DGKM…PLEG). One can recognise an SAM domain in the interval 272-334 (SYTAFGDLEV…KILAALKELQ (63 aa)).

In terms of assembly, interacts with DDX4, PIWIL1, RANBP9 and TDRD1. Expressed exclusively in the testis and ovary and at higher levels in the adult testis compared with the adult ovary.

The protein localises to the cytoplasm. Its function is as follows. Plays a central role during spermatogenesis by repressing transposable elements and preventing their mobilization, which is essential for the germline integrity. Acts via the piRNA metabolic process, which mediates the repression of transposable elements during meiosis by forming complexes composed of piRNAs and Piwi proteins and governs the methylation and subsequent repression of transposons. Its association with pi-bodies suggests a participation in the primary piRNAs metabolic process. Required prior to the pachytene stage to facilitate the production of multiple types of piRNAs, including those associated with repeats involved in the regulation of retrotransposons. May act by mediating protein-protein interactions during germ cell maturation. This is Ankyrin repeat, SAM and basic leucine zipper domain-containing protein 1 from Homo sapiens (Human).